Reading from the N-terminus, the 265-residue chain is Phosphatidylserine decarboxylase proenzyme (265 aa).

Serine 183 functions as the Schiff-base intermediate with substrate; via pyruvic acid in the catalytic mechanism. At serine 183 the chain carries Pyruvic acid (Ser); by autocatalysis. Positions 218–242 (PQIESEPESEPALQTAPVETAANPS) are disordered.

The protein belongs to the phosphatidylserine decarboxylase family. PSD-A subfamily. Heterodimer of a large membrane-associated beta subunit and a small pyruvoyl-containing alpha subunit. Pyruvate serves as cofactor. Is synthesized initially as an inactive proenzyme. Formation of the active enzyme involves a self-maturation process in which the active site pyruvoyl group is generated from an internal serine residue via an autocatalytic post-translational modification. Two non-identical subunits are generated from the proenzyme in this reaction, and the pyruvate is formed at the N-terminus of the alpha chain, which is derived from the carboxyl end of the proenzyme. The post-translation cleavage follows an unusual pathway, termed non-hydrolytic serinolysis, in which the side chain hydroxyl group of the serine supplies its oxygen atom to form the C-terminus of the beta chain, while the remainder of the serine residue undergoes an oxidative deamination to produce ammonia and the pyruvoyl prosthetic group on the alpha chain.

It is found in the cell membrane. The enzyme catalyses a 1,2-diacyl-sn-glycero-3-phospho-L-serine + H(+) = a 1,2-diacyl-sn-glycero-3-phosphoethanolamine + CO2. It functions in the pathway phospholipid metabolism; phosphatidylethanolamine biosynthesis; phosphatidylethanolamine from CDP-diacylglycerol: step 2/2. Its function is as follows. Catalyzes the formation of phosphatidylethanolamine (PtdEtn) from phosphatidylserine (PtdSer). The polypeptide is Phosphatidylserine decarboxylase proenzyme (Neisseria meningitidis serogroup C (strain 053442)).